Reading from the N-terminus, the 1015-residue chain is MASSPLPGPNDILLASPSSAFQPDTLSQPRPGHANLKPNQVGQVILYGIPIVSLVIDGQERLCLAQISNTLLKNFSYNEIHNRRVALGITCVQCTPVQLEILRRAGAMPISSRRCGMITKREAERLCKSFLGENRPPKLPDNFAFDVSHECAWGCRGSFIPARYNSSRAKCIKCSYCNMYFSPNKFIFHSHRTPDAKYTQPDAANFNSWRRHLKLTDKSPQDELVFAWEDVKAMFNGGSRKRALPQPGAHPACHPLSSVKAAAVAAAAAVAGGGGLLGPHLLGAPPPPPPPPPPLAELAGAPHAHHKRPRFDDDDDSLQEAAVVAAASLSAAAASLSVAAASGGAGTGGGGAGGGCVAGVGVGAGAGAGAGAGAKGPRSYPVIPVPSKGSFGGVLQKFPGCGGLFPHPYTFPAAAAAFSLCHKKEDAGAAAEALGGAGAGGAGAAPKAGLSGLFWPAGRKDAFYPPFCMFWPPRTPGGLPVPTYLQPPPQPPSALGCALGESPALLRQAFLDLAEPGGAAGSAEAAPPPGQPPQVVANGPGSGPPPPAGGAGSRDALFESPPGGSGGDCSAGSTPPADSVAAAGAGAAAAGSGPAGSRVPAPHHPHLLEGRKAGGGSYHHSSAFRPVGGKDDAESLAKLHGASAGAPHSAQTHPHHHHHPHHHHHHHHPPQPPSPLLLLPPQPDEPGSERHHPAPPPPPPPPPPPPLAQHPHHRGLLSPGGTSCCYPSEDSSEDEDDEEEEQEVDVEGHKPPEGEEEEEGRDPDDDEEEDEETEVLLGDPLVGGGRFLQGRGPSEKGSSRDRAPAVAGAFPLGLNSSRLLQEDGKLGDPGSDLPPPPPPPLAPQKASGGGSSSPGSPVHHPSLEEQPSYKDSQKTKENNQVIVSTKDDNSFSDKNKEHSFFITDSDASGGDFWRERSGEHTQETNSPHSLKKDVENMGKEELQKVLFEQIDLRRRLEQEFQVLKGNTSFPVFNNFQDQMKRELAYREEMVQQLQIIPYAASLIRKEKLGAHLSKS.

Disordered regions lie at residues 280–316 (HLLG…DDDD) and 518–934 (GAAG…KKDV). Positions 284 to 295 (APPPPPPPPPPL) are enriched in pro residues. Low complexity predominate over residues 575–600 (PPADSVAAAGAGAAAAGSGPAGSRVP). The segment covering 628–637 (GGKDDAESLA) has biased composition (basic and acidic residues). Positions 653 to 669 (HPHHHHHPHHHHHHHHP) are enriched in basic residues. Pro residues-rich tracts occupy residues 670 to 684 (PQPP…PQPD) and 694 to 708 (APPP…PPLA). Acidic residues-rich tracts occupy residues 730-745 (DSSE…QEVD) and 754-774 (GEEE…EETE). A compositionally biased stretch (basic and acidic residues) spans 793-803 (PSEKGSSRDRA). The span at 832–842 (DLPPPPPPPLA) shows a compositional bias: pro residues. Basic and acidic residues-rich tracts occupy residues 861–877 (PSLE…KTKE), 885–899 (TKDD…KEHS), and 912–922 (FWRERSGEHTQ).

This sequence belongs to the SKI family. Interacts with SMAD2 and SMAD3. As to expression, expressed in cerebellum, spinal cord and testis. Isoform 2 is present in cerebellum (at protein level).

Its subcellular location is the nucleus. The protein localises to the cytoplasm. In terms of biological role, exhibits transcriptional repressor activity. Acts as a TGF-beta antagonist in the nervous system. In Homo sapiens (Human), this protein is SKI family transcriptional corepressor 2.